A 61-amino-acid chain; its full sequence is Conotoxin 3 (61 aa).

Residues 1-21 (MRCLPVFVILLLLIASVPSDA) form the signal peptide. The propeptide occupies 22 to 48 (VQLKTKDDMPLPSFNGNARRTPRMLSN). At Trp58 the chain carries 6'-bromotryptophan.

This sequence belongs to the conotoxin T superfamily. Post-translationally, contains 2 disulfide bonds that can be either 'C1-C3, C2-C4' or 'C1-C4, C2-C3', since these disulfide connectivities have been observed for conotoxins with cysteine framework V (for examples, see AC P0DQQ7 and AC P81755). Contains 2 disulfide bonds. As to expression, expressed by the venom duct.

The protein resides in the secreted. The protein is Conotoxin 3 of Conus textile (Cloth-of-gold cone).